The sequence spans 430 residues: Histidine--tRNA ligase (430 aa).

It belongs to the class-II aminoacyl-tRNA synthetase family. In terms of assembly, homodimer.

The protein localises to the cytoplasm. The catalysed reaction is tRNA(His) + L-histidine + ATP = L-histidyl-tRNA(His) + AMP + diphosphate + H(+). In Lactococcus lactis subsp. lactis (strain IL1403) (Streptococcus lactis), this protein is Histidine--tRNA ligase.